The chain runs to 306 residues: Methylated RNA-binding protein 1 (306 aa).

The YTH domain maps to S155–F290. RNA-binding positions include K161–S163, N207, and W231.

In terms of biological role, RNA-binding protein that acts as a post-transcriptional regulator of phosphate metabolism by binding to the 3'-UTR region of PHO4 mRNA, decreasing its stability. Acts by recognizing and binding N6-methyladenosine (m6A)-containing RNAs, a modification present at internal sites of mRNAs and some non-coding RNAs. The chain is Methylated RNA-binding protein 1 from Saccharomyces cerevisiae (strain ATCC 204508 / S288c) (Baker's yeast).